The sequence spans 92 residues: Small ribosomal subunit protein uS19 (92 aa).

It belongs to the universal ribosomal protein uS19 family.

Protein S19 forms a complex with S13 that binds strongly to the 16S ribosomal RNA. This chain is Small ribosomal subunit protein uS19, found in Limosilactobacillus reuteri (strain DSM 20016) (Lactobacillus reuteri).